A 340-amino-acid polypeptide reads, in one-letter code: Cysteinyl leukotriene receptor 1 (340 aa).

The Extracellular portion of the chain corresponds to 1-31; that stretch reads MDETGNPTIPPASNNTCYDSIDDFRNQVYST. An N-linked (GlcNAc...) asparagine glycan is attached at Asn14. The helical transmembrane segment at 32–52 threads the bilayer; the sequence is LYSMISVVGFFGNGFVLYVLV. The Cytoplasmic segment spans residues 53 to 60; sequence KTYHEKSA. A helical transmembrane segment spans residues 61-81; sequence FQVYMINLAVADLLCVCTLPL. Residues 82–109 are Extracellular-facing; it reads RVAYYVHKGIWLFGDFLCRLSTYALYVN. A disulfide bond links Cys99 and Cys176. Residues 110–130 traverse the membrane as a helical segment; that stretch reads LYCSIFFMTAMSFFRCVAIVF. Residues 131-144 are Cytoplasmic-facing; the sequence is PVQNISLVTQKKAR. Residues 145 to 165 form a helical membrane-spanning segment; that stretch reads LVCIAIWMFVILTSSPFLMAN. Residues 166–196 lie on the Extracellular side of the membrane; that stretch reads TYKDEKNNTKCFEPPQDNQAKNYVLILHYVS. An N-linked (GlcNAc...) asparagine glycan is attached at Asn172. Residues 197–217 traverse the membrane as a helical segment; the sequence is LFIGFIIPFITIIVCYTMIIF. Over 218–233 the chain is Cytoplasmic; that stretch reads TLLKSSMKKNLSSRKR. The helical transmembrane segment at 234 to 254 threads the bilayer; that stretch reads AIGMIIVVTAAFLVSFMPYHI. Residues 255–279 lie on the Extracellular side of the membrane; it reads QRTIHLHFLHNKTKPCDSILRMQKS. N-linked (GlcNAc...) asparagine glycosylation is present at Asn265. The chain crosses the membrane as a helical span at residues 280–300; it reads VVITLSLAASNCCFDPLLYFF. The Cytoplasmic portion of the chain corresponds to 301 to 340; sequence SGGNFRRRLSTIRKYSLSSMTYIPKKKTSLPQKGKDICKE.

The protein belongs to the G-protein coupled receptor 1 family.

It localises to the cell membrane. Functionally, receptor for cysteinyl leukotrienes mediating bronchoconstriction of individuals with and without asthma. Stimulation by LTD4 results in the contraction and proliferation of smooth muscle, edema, eosinophil migration and damage to the mucus layer in the lung. This response is mediated via a G-protein that activates a phosphatidylinositol-calcium second messenger system. This chain is Cysteinyl leukotriene receptor 1 (CYSLTR1), found in Cavia porcellus (Guinea pig).